Reading from the N-terminus, the 178-residue chain is High mobility group B protein 1 (178 aa).

Basic and acidic residues-rich tracts occupy residues 1 to 52 (MKTA…DPNK) and 101 to 118 (APYE…EKQM). Disordered regions lie at residues 1–59 (MKTA…APSA) and 75–178 (NPNV…EEED). The HMG box DNA-binding region spans 53–122 (PKRAPSAFFV…EYEKQMDAYN (70 aa)). Phosphoserine is present on residues serine 137 and serine 146. The span at 140–178 (NDEDEASGEEELLEKEAAGDDEEEEEEEDDDDDDDEEED) shows a compositional bias: acidic residues.

It belongs to the HMGB family. As to expression, expressed in cotyledons, roots, stems, leaves and flowers (excluding pedicels).

Its subcellular location is the nucleus. Binds preferentially double-stranded DNA. Modulates general plant growth and stress tolerance. Confers sensitivity to salt and genotoxic (methyl methanesulfonate, MMS) stresses. This is High mobility group B protein 1 (HMGB1) from Arabidopsis thaliana (Mouse-ear cress).